The sequence spans 402 residues: Imidazolonepropionase (402 aa).

Fe(3+) is bound by residues histidine 66 and histidine 68. The Zn(2+) site is built by histidine 66 and histidine 68. Residues arginine 75, tyrosine 138, and histidine 171 each contribute to the 4-imidazolone-5-propanoate site. N-formimidoyl-L-glutamate is bound at residue tyrosine 138. A Fe(3+)-binding site is contributed by histidine 236. Residue histidine 236 participates in Zn(2+) binding. A 4-imidazolone-5-propanoate-binding site is contributed by glutamine 239. Residue aspartate 311 participates in Fe(3+) binding. A Zn(2+)-binding site is contributed by aspartate 311. Residues asparagine 313 and glycine 315 each contribute to the N-formimidoyl-L-glutamate site. Threonine 316 contributes to the 4-imidazolone-5-propanoate binding site.

The protein belongs to the metallo-dependent hydrolases superfamily. HutI family. Requires Zn(2+) as cofactor. It depends on Fe(3+) as a cofactor.

It is found in the cytoplasm. It catalyses the reaction 4-imidazolone-5-propanoate + H2O = N-formimidoyl-L-glutamate. The protein operates within amino-acid degradation; L-histidine degradation into L-glutamate; N-formimidoyl-L-glutamate from L-histidine: step 3/3. Its function is as follows. Catalyzes the hydrolytic cleavage of the carbon-nitrogen bond in imidazolone-5-propanoate to yield N-formimidoyl-L-glutamate. It is the third step in the universal histidine degradation pathway. The chain is Imidazolonepropionase from Pseudomonas aeruginosa (strain LESB58).